The chain runs to 485 residues: WD repeat-containing protein 13 (485 aa).

A phosphoserine mark is found at Ser-70, Ser-74, and Ser-79. Arg-114 bears the Asymmetric dimethylarginine; alternate mark. Arg-114 is subject to Omega-N-methylarginine; alternate. WD repeat units lie at residues 170–210 (HVDE…PTVL), 215–254 (GHTR…CIRE), 302–341 (KLTG…GKLT), 406–446 (HPVR…KAAV), and 451–484 (GHSA…RREQ).

Its subcellular location is the nucleus. The chain is WD repeat-containing protein 13 (WDR13) from Pongo abelii (Sumatran orangutan).